The following is a 157-amino-acid chain: XylDLEGF operon transcriptional activator 2 (157 aa).

The region spanning 39–140 (ERVVQFIEEN…GELPSDTLSL (102 aa)) is the HTH araC/xylS-type domain. 2 consecutive DNA-binding regions (H-T-H motif) follow at residues 56-77 (EQLA…EKHT) and 107-130 (ITEV…RSTF).

The protein localises to the cytoplasm. In terms of biological role, regulatory protein of the TOL plasmid xyl operons. XylS activates the xylXYZLTEGFJQKIH operon required for the degradation of toluene, m-xylene and p-xylene. This chain is XylDLEGF operon transcriptional activator 2 (xylS2), found in Pseudomonas putida (Arthrobacter siderocapsulatus).